A 236-amino-acid polypeptide reads, in one-letter code: Class B acid phosphatase (236 aa).

The signal sequence occupies residues 1–22; sequence MKNVMKLSVIALLTAAAVPAMA. Catalysis depends on Asp-67, which acts as the Nucleophile. Mg(2+)-binding residues include Asp-67 and Asp-69. Residue Asp-69 is the Proton donor of the active site. Substrate-binding positions include 136–137 and Lys-176; that span reads TG. Position 191 (Asp-191) interacts with Mg(2+).

The protein belongs to the class B bacterial acid phosphatase family. In terms of assembly, homotetramer. Mg(2+) serves as cofactor.

Its subcellular location is the periplasm. It carries out the reaction a phosphate monoester + H2O = an alcohol + phosphate. Its function is as follows. Dephosphorylates several organic phosphate monoesters. Also has a phosphotransferase activity catalyzing the transfer of low-energy phosphate groups from organic phosphate monoesters to free hydroxyl groups of various organic compounds. This is Class B acid phosphatase (aphA) from Haemophilus influenzae (strain ATCC 51907 / DSM 11121 / KW20 / Rd).